A 295-amino-acid polypeptide reads, in one-letter code: Fructose-bisphosphate aldolase class 1 (295 aa).

Glutamate 176 acts as the Proton acceptor in catalysis. The active-site Schiff-base intermediate with dihydroxyacetone-P is the lysine 213.

It belongs to the class I fructose-bisphosphate aldolase family.

It carries out the reaction beta-D-fructose 1,6-bisphosphate = D-glyceraldehyde 3-phosphate + dihydroxyacetone phosphate. It functions in the pathway carbohydrate degradation; glycolysis; D-glyceraldehyde 3-phosphate and glycerone phosphate from D-glucose: step 4/4. This chain is Fructose-bisphosphate aldolase class 1, found in Treponema denticola (strain ATCC 35405 / DSM 14222 / CIP 103919 / JCM 8153 / KCTC 15104).